A 340-amino-acid chain; its full sequence is tRNA-dihydrouridine(20/20a) synthase (340 aa).

Residues 22–24 and Q75 contribute to the FMN site; that span reads PMM. C105 functions as the Proton donor in the catalytic mechanism. FMN-binding positions include K144, H177, 217 to 219, and 239 to 240; these read NGG and GR.

It belongs to the Dus family. DusA subfamily. FMN is required as a cofactor.

It catalyses the reaction 5,6-dihydrouridine(20) in tRNA + NADP(+) = uridine(20) in tRNA + NADPH + H(+). The catalysed reaction is 5,6-dihydrouridine(20) in tRNA + NAD(+) = uridine(20) in tRNA + NADH + H(+). The enzyme catalyses 5,6-dihydrouridine(20a) in tRNA + NADP(+) = uridine(20a) in tRNA + NADPH + H(+). It carries out the reaction 5,6-dihydrouridine(20a) in tRNA + NAD(+) = uridine(20a) in tRNA + NADH + H(+). Catalyzes the synthesis of 5,6-dihydrouridine (D), a modified base found in the D-loop of most tRNAs, via the reduction of the C5-C6 double bond in target uridines. Specifically modifies U20 and U20a in tRNAs. This is tRNA-dihydrouridine(20/20a) synthase from Xylella fastidiosa (strain 9a5c).